The primary structure comprises 418 residues: Protein MAEA homolog (418 aa).

The 33-residue stretch at 141-173 folds into the LisH domain; sequence NNTKLKRILVDYMLRMSYFETATKLSESSNIMD. One can recognise a CTLH domain in the interval 179-236; that stretch reads IFREAKKVIDALKNREVASALTWCADNKTRLKKSKSKFEFQLRLQEFIELVRVDTAES. The segment at 330-403 adopts an RING-Gid-type zinc-finger fold; it reads CTKEDPLSQE…NGGKITCPRT (74 aa).

As to quaternary structure, interacts with RANBPM.

Its subcellular location is the cytoplasm. The sequence is that of Protein MAEA homolog from Arabidopsis thaliana (Mouse-ear cress).